A 468-amino-acid chain; its full sequence is MAFGKVKQVMGPVVDVEFEGGELPAINSALRVSNKFISDVEFNLVLEVAQHLGDGVVRTISMDQTEGLVRGEKVKALGTQITAPVGREALGRIINVVGEPIDEMGPVNAKEQWGIHRTAPKFEDQATAAAMLMTGIKVVDLLAPYAKGGKIGLFGGAGVGKTVLIQELIRNIATEHGGFSVFAGVGERTREGNDLWQEMKQSGVLAKTSLVFGQMNEPPGARARVALTGLTVAEYFRDVENQDVLFFVDNIFRFTQAGAEVSALLGRIPSAVGYQPTLATEMGTLQERITSTKKGSITSVQAVYVPADDYTDPAPATTFTHLDATTNLDRDIAAMAIFPAVHPLTSTSRLLDPTVIGEEHYKCARDVQALLQRNRELQDIIAILGMDELSESDKLVVSRSRKIQRFLSQPFFVAEQFTGLPGKYVDIKDTVKGFREILDGKHDALPEQAFYLVGTIEDAIEKAKKLQA.

155–162 (GGAGVGKT) serves as a coordination point for ATP.

Belongs to the ATPase alpha/beta chains family. As to quaternary structure, F-type ATPases have 2 components, CF(1) - the catalytic core - and CF(0) - the membrane proton channel. CF(1) has five subunits: alpha(3), beta(3), gamma(1), delta(1), epsilon(1). CF(0) has three main subunits: a(1), b(2) and c(9-12). The alpha and beta chains form an alternating ring which encloses part of the gamma chain. CF(1) is attached to CF(0) by a central stalk formed by the gamma and epsilon chains, while a peripheral stalk is formed by the delta and b chains.

It localises to the cell inner membrane. The enzyme catalyses ATP + H2O + 4 H(+)(in) = ADP + phosphate + 5 H(+)(out). Produces ATP from ADP in the presence of a proton gradient across the membrane. The catalytic sites are hosted primarily by the beta subunits. The polypeptide is ATP synthase subunit beta (Bdellovibrio bacteriovorus (strain ATCC 15356 / DSM 50701 / NCIMB 9529 / HD100)).